Here is an 880-residue protein sequence, read N- to C-terminus: Leucine--tRNA ligase (880 aa).

The short motif at 46–56 (PYPSGALHMGH) is the 'HIGH' region element. A disordered region spans residues 483–502 (SPIKTEPTWRQTTCPDCGGP). The 'KMSKS' region motif lies at 638–642 (KMSKS). K641 is an ATP binding site.

Belongs to the class-I aminoacyl-tRNA synthetase family.

The protein resides in the cytoplasm. It carries out the reaction tRNA(Leu) + L-leucine + ATP = L-leucyl-tRNA(Leu) + AMP + diphosphate. In Xanthomonas oryzae pv. oryzae (strain PXO99A), this protein is Leucine--tRNA ligase.